Consider the following 191-residue polypeptide: Large ribosomal subunit protein bL9 (191 aa).

Residues 150-191 (EAERQAKGESLTSADAIYGVDEDALRPEDFFDPDADRDGDDE) are disordered. Residues 179–191 (FFDPDADRDGDDE) show a composition bias toward acidic residues.

Belongs to the bacterial ribosomal protein bL9 family.

Binds to the 23S rRNA. This is Large ribosomal subunit protein bL9 from Allorhizobium ampelinum (strain ATCC BAA-846 / DSM 112012 / S4) (Agrobacterium vitis (strain S4)).